A 120-amino-acid chain; its full sequence is Large ribosomal subunit protein bL36m (120 aa).

The protein belongs to the bacterial ribosomal protein bL36 family. As to quaternary structure, component of the mitochondrial ribosome large subunit (39S) which comprises a 16S rRNA and about 50 distinct proteins.

It localises to the mitochondrion. The sequence is that of Large ribosomal subunit protein bL36m (mrpl36) from Osmerus mordax (Rainbow smelt).